The primary structure comprises 2410 residues: Dual specificity protein kinase splA (2410 aa).

Disordered regions lie at residues 29-48 (NNNN…NNNN), 66-103 (NHPS…GELT), 116-158 (NTQT…SNGG), 187-252 (NISP…SSGI), 508-647 (QQLQ…VPSA), and 659-820 (SSSS…KKEG). Low complexity-rich tracts occupy residues 116–128 (NTQT…TSPN) and 137–158 (NTTT…SNGG). The segment covering 514-525 (QPPPTIQPPPQQ) has biased composition (pro residues). Residues 530–544 (LRGNRSSGNLSGLNS) are compositionally biased toward low complexity. Positions 545–554 (FSLKQSTDSL) are enriched in polar residues. Low complexity predominate over residues 560-583 (SQQSTVSSNSTPIAATPISPLTAP). A compositionally biased stretch (pro residues) spans 584-594 (TSPPPPPPPPT). 6 stretches are compositionally biased toward low complexity: residues 595–618 (NFNS…NTTV), 627–639 (VLPK…SPRP), 659–686 (SSSS…LNIS), 701–738 (SPSY…SPSV), 746–759 (ISPN…PNIS), and 777–813 (NTNN…NNTN). 2 B30.2/SPRY domains span residues 822-1004 (SSWF…GPFS) and 1020-1209 (DSGG…PPFK). 2 disordered regions span residues 1228-1428 (PNGN…NNIY) and 1493-1512 (SLGV…PRKI). 4 stretches are compositionally biased toward low complexity: residues 1229–1359 (NGNN…NNNI), 1373–1399 (SSTG…NNSS), 1419–1428 (SSTNNNNNIY), and 1493–1507 (SLGV…SPKT). The region spanning 1481 to 1703 (PITASTNHTL…CVATFPGGHF (223 aa)) is the B30.2/SPRY 3 domain. One can recognise an SAM domain in the interval 1734–1798 (WAPNDVAIWL…INRLNRMIQI (65 aa)). Residues 1862 to 2105 (KSYTQKEIED…PPPPPQLPVR (244 aa)) are disordered. Over residues 1865-1874 (TQKEIEDRNR) the composition is skewed to basic and acidic residues. The segment covering 1951-1967 (SVSSTGGSSGFLTFPSS) has biased composition (low complexity). Residues 1989–2002 (ITSNYKGITNTGQP) are compositionally biased toward polar residues. A compositionally biased stretch (low complexity) spans 2020–2070 (SNNGNNGNNNNNNNNNNIKANQQQQQQSSYQQSQTQQQQQHITSTSTSTTN). Pro residues predominate over residues 2089-2102 (PSRPPPPPPPPPQL). The Protein kinase domain occupies 2115–2387 (LEFGQTIGKG…FKQIIVHLKE (273 aa)). Residues 2121–2129 (IGKGFFGEV) and Lys2142 contribute to the ATP site. Asp2243 acts as the Proton acceptor in catalysis.

This sequence belongs to the protein kinase superfamily. TKL Tyr protein kinase family. In terms of processing, tyrosine kinase domain is capable of autophosphorylation, in vitro; however it is also autophosphorylated on serine and threonine residues.

The catalysed reaction is L-tyrosyl-[protein] + ATP = O-phospho-L-tyrosyl-[protein] + ADP + H(+). Functionally, essential for spore differentiation. This is Dual specificity protein kinase splA (splA) from Dictyostelium discoideum (Social amoeba).